Consider the following 309-residue polypeptide: Glutaminase (309 aa).

The substrate site is built by serine 64, asparagine 114, glutamate 160, asparagine 167, tyrosine 191, tyrosine 243, and valine 261.

The protein belongs to the glutaminase family. Homotetramer.

The enzyme catalyses L-glutamine + H2O = L-glutamate + NH4(+). The protein is Glutaminase of Rhodopseudomonas palustris (strain BisB18).